The sequence spans 76 residues: Theta defensin subunit B (76 aa).

An N-terminal signal peptide occupies residues 1 to 22 (MRTFALLTAMLLLVALQPQAEA). The propeptide occupies 23–64 (RQARADEAAAQQQPGADDQGMAHSFTRPENAALPLSESAKGL). The segment at 24–54 (QARADEAAAQQQPGADDQGMAHSFTRPENAA) is disordered. The segment covering 30–44 (AAAQQQPGADDQGMA) has biased composition (low complexity). A Cyclopeptide (Arg-Cys) (interchain with C-73 in subunit A); in form BTD-1 cross-link involves residue R65. A Cyclopeptide (Arg-Cys) (interchain with C-73 in subunit B); in form BTD-2 cross-link involves residue R65. A disulfide bridge links C68 with C73. A Cyclopeptide (Cys-Arg) (interchain with R-65 in subunit A); in form BTD-1 cross-link involves residue C73. C73 participates in a covalent cross-link: Cyclopeptide (Cys-Arg) (interchain with R-65 in subunit B); in form BTD-2. Residues 74-76 (QLL) constitute a propeptide that is removed on maturation.

It belongs to the alpha-defensin family. Theta subfamily. As to quaternary structure, BTD-1 is a cyclic heterodimer composed of subunits A and B; disulfide-linked. BTD-2 is a cyclic homodimer composed of two subunits B; disulfide-linked. Post-translationally, forms a cyclic peptide with subunit A (BTD-1), or subunit B (BTD-2). An additional intersubunit disulfide bond is formed.

BTD-1 and BTD-2 have antimicrobial activity against the Gram-negative bacterium E.coli ML35, the Gram-positive bacterium S.aureus 502a, and the fungus C.albicans 16820. BTD-2 is more effective against E.coli than BTD-1. This is Theta defensin subunit B (BTDB) from Papio anubis (Olive baboon).